Reading from the N-terminus, the 1265-residue chain is 1-phosphatidylinositol 4,5-bisphosphate phosphodiesterase gamma-2 (1265 aa).

The PH domain maps to 20 to 131 (RALELGTVMT…WLSGLKILHQ (112 aa)). One can recognise a PI-PLC X-box domain in the interval 312–456 (QDMNNPLSHY…LREKIIIKHK (145 aa)). Catalysis depends on residues His-327 and His-372. SH2 domains are found at residues 532–635 (WFHK…TDPV) and 646–735 (WYYD…RYPV). Phosphotyrosine; by BTK is present on residues Tyr-753 and Tyr-759. An SH3 domain is found at 769–829 (MPQRTVKALY…PSNYVEDIST (61 aa)). One can recognise a PI-PLC Y-box domain in the interval 930 to 1044 (LSDLVVYCKP…GYVLQPESMR (115 aa)). The C2 domain occupies 1038–1169 (LQPESMRTEK…SGFRSVPLKN (132 aa)). A Phosphotyrosine; by BTK modification is found at Tyr-1197. A phosphotyrosine mark is found at Tyr-1217 and Tyr-1245.

Part of a complex composed of EEIG1, TNFRSF11A/RANK, PLCG2, GAB2, TEC and BTK; complex formation increases in the presence of TNFSF11/RANKL. Interacts (via SH2 domain) with CSF1R (tyrosine phosphorylated). Interacts constitutively with THEMIS2. Ca(2+) serves as cofactor. Phosphorylated on tyrosine residues by CSF1R. Phosphorylated on tyrosine residues by BTK and SYK; upon ligand-induced activation of a variety of growth factor receptors and immune system receptors. Phosphorylation leads to increased phospholipase activity.

It localises to the membrane raft. The catalysed reaction is a 1,2-diacyl-sn-glycero-3-phospho-(1D-myo-inositol-4,5-bisphosphate) + H2O = 1D-myo-inositol 1,4,5-trisphosphate + a 1,2-diacyl-sn-glycerol + H(+). Its function is as follows. The production of the second messenger molecules diacylglycerol (DAG) and inositol 1,4,5-trisphosphate (IP3) is mediated by activated phosphatidylinositol-specific phospholipase C enzymes. It is a crucial enzyme in transmembrane signaling. The chain is 1-phosphatidylinositol 4,5-bisphosphate phosphodiesterase gamma-2 from Homo sapiens (Human).